The following is an 828-amino-acid chain: MRPRPEGRGLRAGVALSPALLLLLLLPPPPTLLGRLWAAGTPSPSAPGARQDGALGAGRVKRGWVWNQFFVVEEYTGTEPLYVGKIHSDSDEGDGAIKYTISGEGAGTIFLIDELTGDIHAMERLDREQKTFYTLRAQARDRATNRLLEPESEFIIKVQDINDSEPRFLHGPYIGSVAELSPTGTSVMQVMASDADDPTYGSSARLVYSVLDGEHHFTVDPKTGVIRTAVPDLDRESQERYEVVIQATDMAGQLGGLSGSTTVTIVVTDVNDNPPRFPQKMYQFSIQESAPIGTAVGRVKAEDSDVGENTDMTYHLKDESSSGGDVFKVTTDSDTQEAIIVVQKRLDFESQPVHTVILEALNKFVDPRFADLGTFRDQAIVRVAVTDVDEPPEFRPPSGLLEVQEDAQVGSLVGVVTARDPDAANRPVRYAIDRESDLDQIFDIDADTGAIVTGKGLDRETAGWHNITVLAMEADNHAQLSRASLRIRILDVNDNPPELATPYEAAVCEDAKPGQLIQTISVVDRDEPQGGHRFYFRLVPEAPSNPHFSLLDIQDNTAAVHTQHVGFNRQEQDVFFLPILVVDSGPPTLSSTGTLTIRICGCDSSGTIQSCNTTAFVMAASLSPGALIALLVCVLILVVLVLLILTLRRHHKSHLSSDEDEDMRDNVIKYNDEGGGEQDTEAYDMSALRSLYDFGELKGGDGGGSAGGGAGGGSGGGAGSPPQAHLPSERHSLPQGPPSPEPDFSVFRDFISRKVALADGDLSVPPYDAFQTYAFEGADSPAASLSSLHSGSSGSEQDFAYLSSWGPRFRPLAALYAGHRGDDEAQAS.

An N-terminal signal peptide occupies residues 1–34; sequence MRPRPEGRGLRAGVALSPALLLLLLLPPPPTLLG. Over 36 to 624 the chain is Extracellular; it reads LWAAGTPSPS…AFVMAASLSP (589 aa). 5 consecutive Cadherin domains span residues 64 to 168, 169 to 277, 278 to 394, 395 to 498, and 499 to 616; these read WVWN…EPRF, LHGP…PPRF, PQKM…PPEF, RPPS…NPPE, and LATP…TTAF. Asparagine 162 carries N-linked (GlcNAc...) asparagine glycosylation. Residues asparagine 466 and asparagine 612 are each glycosylated (N-linked (GlcNAc...) asparagine). A helical membrane pass occupies residues 625–645; sequence GALIALLVCVLILVVLVLLIL. The Cytoplasmic portion of the chain corresponds to 646–828; it reads TLRRHHKSHL…HRGDDEAQAS (183 aa). The segment covering 702–719 has biased composition (gly residues); the sequence is GGGSAGGGAGGGSGGGAG. A disordered region spans residues 702-745; the sequence is GGGSAGGGAGGGSGGGAGSPPQAHLPSERHSLPQGPPSPEPDFS.

The protein localises to the cell membrane. Its function is as follows. Cadherins are calcium-dependent cell adhesion proteins. They preferentially interact with themselves in a homophilic manner in connecting cells; cadherins may thus contribute to the sorting of heterogeneous cell types. PB-cadherins may have a role in the morphological organization of pituitary gland and brain tissues. This is Cadherin-22 (CDH22) from Homo sapiens (Human).